The following is a 42-amino-acid chain: Photosystem I reaction center subunit IX (42 aa).

Residues Tyr-7–Ile-27 form a helical membrane-spanning segment.

Belongs to the PsaJ family.

The protein localises to the plastid. The protein resides in the chloroplast thylakoid membrane. May help in the organization of the PsaE and PsaF subunits. This Platanus occidentalis (Sycamore) protein is Photosystem I reaction center subunit IX.